A 458-amino-acid polypeptide reads, in one-letter code: MSITKEFDTIAAISTPLGEGAIGIVRISGTDALKIASKIYRGKDLSAIQSHTLNYGHIVDPDKNEILDEVMLGVMLAPKTFTREDVIEINTHGGIAVTNEILQLILRHGARMAEPGEFTKRAFLNGRVDLTQAEAVMDLIRAKTDKAMDIAVKQLDGSLKTLINNTRQEILNTLAQVEVNIDYPEYDDVEEMTTTLMREKTQEFQALMENLLRTARRGKILREGLSTAIIGRPNVGKSSLLNNLLREEKAIVTDIEGTTRDVIEEYVNIKGVPLKLVDTAGIRDTDDIVEKIGVERSKKALEEADLVLLVLNSSEPLTLQDRSLLELSKESNRIVLLNKTDLPQKIEVNELPENVIPISVLENENIDKIEERINDIFFDNAGMVEHDATYLSNARHISLIEKAVDSLKAVNEGLELGMPVDLLQVDMTRTWEILGEITGDAAPDELITQLFSQFCLGK.

Residues arginine 26, glutamate 88, and arginine 127 each contribute to the (6S)-5-formyl-5,6,7,8-tetrahydrofolate site. One can recognise a TrmE-type G domain in the interval 224–378 (GLSTAIIGRP…IEERINDIFF (155 aa)). Asparagine 234 lines the K(+) pocket. GTP contacts are provided by residues 234 to 239 (NVGKSS), 253 to 259 (TDIEGTT), and 278 to 281 (DTAG). Serine 238 contacts Mg(2+). K(+) contacts are provided by threonine 253, isoleucine 255, and threonine 258. Mg(2+) is bound at residue threonine 259. Position 458 (lysine 458) interacts with (6S)-5-formyl-5,6,7,8-tetrahydrofolate.

The protein belongs to the TRAFAC class TrmE-Era-EngA-EngB-Septin-like GTPase superfamily. TrmE GTPase family. Homodimer. Heterotetramer of two MnmE and two MnmG subunits. It depends on K(+) as a cofactor.

It localises to the cytoplasm. Exhibits a very high intrinsic GTPase hydrolysis rate. Involved in the addition of a carboxymethylaminomethyl (cmnm) group at the wobble position (U34) of certain tRNAs, forming tRNA-cmnm(5)s(2)U34. The protein is tRNA modification GTPase MnmE of Streptococcus agalactiae serotype III (strain NEM316).